The chain runs to 182 residues: Ribosome maturation factor RimM (182 aa).

Positions 103-182 (EDDYYWKDLM…RVEVDWDPGF (80 aa)) constitute a PRC barrel domain.

It belongs to the RimM family. In terms of assembly, binds ribosomal protein uS19.

It is found in the cytoplasm. Functionally, an accessory protein needed during the final step in the assembly of 30S ribosomal subunit, possibly for assembly of the head region. Essential for efficient processing of 16S rRNA. May be needed both before and after RbfA during the maturation of 16S rRNA. It has affinity for free ribosomal 30S subunits but not for 70S ribosomes. The chain is Ribosome maturation factor RimM from Yersinia enterocolitica serotype O:8 / biotype 1B (strain NCTC 13174 / 8081).